Reading from the N-terminus, the 249-residue chain is Probable transcriptional regulatory protein Wbm0670 (249 aa).

This sequence belongs to the TACO1 family.

The protein resides in the cytoplasm. The sequence is that of Probable transcriptional regulatory protein Wbm0670 from Wolbachia sp. subsp. Brugia malayi (strain TRS).